The chain runs to 554 residues: Beta-eudesmol synthase (554 aa).

3 residues coordinate Mg(2+): Asp305, Asp309, and Glu456. The DDXXD motif motif lies at 305 to 309; that stretch reads DDIYD.

It belongs to the terpene synthase family. Requires Mg(2+) as cofactor. The cofactor is Mn(2+). As to expression, expressed in rhizomes. Detected in stems, but not in leaves.

The protein resides in the cytoplasm. It carries out the reaction (2E,6E)-farnesyl diphosphate + H2O = beta-eudesmol + diphosphate. The catalysed reaction is (2E,6E)-farnesyl diphosphate + H2O = 10-epi-gamma-eudesmol + diphosphate. The enzyme catalyses (2E,6E)-farnesyl diphosphate + H2O = alpha-eudesmol + diphosphate. Its pathway is secondary metabolite biosynthesis; terpenoid biosynthesis. Its function is as follows. Involved in the biosynthesis of beta-eudesmol, a sesquiterpene with antifungal activity and responsible for resistance of plants to ant attack. Produces mainly beta-eudesmol, but also smaller amounts of 10-epi-gamma-eudesmol, alpha-eudesmol and aristolene. The chain is Beta-eudesmol synthase (ZSS2) from Zingiber zerumbet (Shampoo ginger).